The sequence spans 131 residues: Small ribosomal subunit protein uS11 (131 aa).

Belongs to the universal ribosomal protein uS11 family. In terms of assembly, part of the 30S ribosomal subunit. Interacts with proteins S7 and S18. Binds to IF-3.

Functionally, located on the platform of the 30S subunit, it bridges several disparate RNA helices of the 16S rRNA. Forms part of the Shine-Dalgarno cleft in the 70S ribosome. This chain is Small ribosomal subunit protein uS11, found in Helicobacter pylori (strain G27).